Reading from the N-terminus, the 613-residue chain is tRNA (uracil-5-)-methyltransferase homolog A (613 aa).

The disordered stretch occupies residues 1–46; it reads MSEPAAEVPEPMEDCGQDASAVPSSAAPLCQKEEAGPGPAAGPGTQ. The 74-residue stretch at 63–136 folds into the RRM domain; that stretch reads FKLELQNVPR…CPLSVRLARP (74 aa). A coiled-coil region spans residues 170–200; that stretch reads YTEQLEQKRLECERVLQKLAKEIGNTNRALL. Ser368 is subject to Phosphoserine. Residues Gln401, Glu451, and Asp500 each contribute to the S-adenosyl-L-methionine site. Cys528 (nucleophile) is an active-site residue. Glu571 (proton acceptor) is an active-site residue.

It belongs to the class I-like SAM-binding methyltransferase superfamily. RNA M5U methyltransferase family. As to expression, widely expressed at low level. Expressed at higher level in proliferating cells.

It is found in the cytoplasm. The protein resides in the cytosol. It catalyses the reaction uridine(54) in tRNA + S-adenosyl-L-methionine = 5-methyluridine(54) in tRNA + S-adenosyl-L-homocysteine + H(+). The enzyme catalyses a uridine in mRNA + S-adenosyl-L-methionine = a 5-methyluridine in mRNA + S-adenosyl-L-homocysteine + H(+). Its function is as follows. S-adenosyl-L-methionine-dependent methyltransferase that catalyzes the formation of 5-methyl-uridine in tRNAs and some mRNAs. Mainly catalyzes the methylation of uridine at position 54 (m5U54) in cytosolic tRNAs. Also able to mediate the formation of 5-methyl-uridine in some mRNAs. The protein is tRNA (uracil-5-)-methyltransferase homolog A of Mus musculus (Mouse).